A 319-amino-acid chain; its full sequence is MELLSPPLRDVDLTGPDGSLCNFATADDFYDDPCFDSPDLRFFEDLDPRLVHVGALLKPEEHSHFPAAAHPAPGAREDEHVRAPSGHHQAGRCLLWACKACKRKTTNADRRKAATMRERRRLSKVNEAFETLKRCTSSNPNQRLPKVEILRNAIRYIEGLQALLRDQDAAPPGAAAAFYAPGPLPPGRGGEHYSGDSDASSPRSNCSDGMMDYSGPPSGARRRNCYDGTYYSEAPSEPRPGKNAAVSSLDCLSSIVESISTESPAAPALLLADTPRESSPGPQEAAAGSEVERGTPTPSPDAAPQCPASANPNPIYQVL.

A Peptide (Met-Gly) (interchain with G-Cter in ubiquitin) cross-link involves residue Met1. Lys104 carries the N6-methyllysine; by EHMT2 modification. Positions Asp109–Leu160 constitute a bHLH domain. 2 disordered regions span residues Ala174–Arg221 and Ala266–Leu319. 2 stretches are compositionally biased toward polar residues: residues Ser197–Ser207 and Ala308–Leu319.

As to quaternary structure, efficient DNA binding requires dimerization with another bHLH protein. Seems to form active heterodimers with ITF-2. Interacts with SUV39H1. Interacts with DDX5. Interacts with CHD2. Interacts with TSC22D3. Interacts with SETD3. Interacts with P-TEFB complex; promotes the transcriptional activity of MYOD1 through its CDK9-mediated phosphorylation. Interacts with CSRP3. Interacts with NUPR1. Post-translationally, phosphorylated by CDK9. This phosphorylation promotes its function in muscle differentiation. Acetylated by a complex containing EP300 and PCAF. The acetylation is essential to activate target genes. Conversely, its deacetylation by SIRT1 inhibits its function. In terms of processing, ubiquitinated on the N-terminus; which is required for proteasomal degradation. Post-translationally, methylation at Lys-104 by EHMT2/G9a inhibits myogenic activity.

Its subcellular location is the nucleus. In terms of biological role, acts as a transcriptional activator that promotes transcription of muscle-specific target genes and plays a role in muscle differentiation. Together with MYF5 and MYOG, co-occupies muscle-specific gene promoter core region during myogenesis. Induces fibroblasts to differentiate into myoblasts. Interacts with and is inhibited by the twist protein. This interaction probably involves the basic domains of both proteins. The protein is Myoblast determination protein 1 (MYOD1) of Sus scrofa (Pig).